We begin with the raw amino-acid sequence, 208 residues long: MSRYTGPVEKLERRLGVDLFMKGERRLAGKSALLKRPYAPGQHGQRRAKVSEYGSQLREKQKAKFMYGLSEKQFRRLFKEAARREGNTGEILVQLLEQRLDNLVYRMGFATTRRFARQLVTHGHILVDGKRVDIPSYSVKVGQKIEIAEKSKNNPQILRAVELTAQTGIVAWVDVEKDKKFGIFTRKPERDEIVIPIEERFIVELYSK.

The 64-residue stretch at 98–161 (QRLDNLVYRM…KNNPQILRAV (64 aa)) folds into the S4 RNA-binding domain.

This sequence belongs to the universal ribosomal protein uS4 family. Part of the 30S ribosomal subunit. Contacts protein S5. The interaction surface between S4 and S5 is involved in control of translational fidelity.

In terms of biological role, one of the primary rRNA binding proteins, it binds directly to 16S rRNA where it nucleates assembly of the body of the 30S subunit. With S5 and S12 plays an important role in translational accuracy. The sequence is that of Small ribosomal subunit protein uS4 from Campylobacter hominis (strain ATCC BAA-381 / DSM 21671 / CCUG 45161 / LMG 19568 / NCTC 13146 / CH001A).